A 271-amino-acid polypeptide reads, in one-letter code: uncharacterized protein (271 aa).

A DOD-type homing endonuclease domain is found at 77–205 (IIGVYFGDAN…SKELLKKLDV (129 aa)).

This is an uncharacterized protein from Methanocaldococcus jannaschii (strain ATCC 43067 / DSM 2661 / JAL-1 / JCM 10045 / NBRC 100440) (Methanococcus jannaschii).